Reading from the N-terminus, the 105-residue chain is MDARDIVLSVISVFSAAALVYRWLSLYDRVDMTVIFFATLLIASLTLLLISIELRMQRIMDEFKSVKRTIAVNSDDLEGRIERLFIEKVRDLEDKLESIERRMYR.

The next 2 membrane-spanning stretches (helical) occupy residues 7–26 (VLSVISVFSAAALVYRWLSL) and 30–52 (VDMTVIFFATLLIASLTLLLISI).

The protein localises to the cell membrane. This is an uncharacterized protein from Archaeoglobus fulgidus (strain ATCC 49558 / DSM 4304 / JCM 9628 / NBRC 100126 / VC-16).